Here is a 378-residue protein sequence, read N- to C-terminus: Glutamate 5-kinase (378 aa).

K14 contacts ATP. The substrate site is built by S54, D141, and N153. S173–D174 lines the ATP pocket. A PUA domain is found at A279–D356.

Belongs to the glutamate 5-kinase family.

The protein localises to the cytoplasm. It catalyses the reaction L-glutamate + ATP = L-glutamyl 5-phosphate + ADP. It participates in amino-acid biosynthesis; L-proline biosynthesis; L-glutamate 5-semialdehyde from L-glutamate: step 1/2. In terms of biological role, catalyzes the transfer of a phosphate group to glutamate to form L-glutamate 5-phosphate. The protein is Glutamate 5-kinase of Brucella canis (strain ATCC 23365 / NCTC 10854 / RM-666).